The primary structure comprises 141 residues: VLSPADKTNVKSTWDKIGGHAGEYGGEALERTFVSFPTTKTYFPHFDLSHGSAQVKAHGKKVADALTNAVAHMDDLPGALSALSDLHAYKLRVDPVNFKLLSHCLLVTLACHHPAEFTPAVHASLDKFFSAVSTVLTSKYR.

The 141-residue stretch at 1 to 141 (VLSPADKTNV…VSTVLTSKYR (141 aa)) folds into the Globin domain. Residue Ser3 is modified to Phosphoserine. Lys7 carries the post-translational modification N6-succinyllysine. The residue at position 8 (Thr8) is a Phosphothreonine. Lys11 bears the N6-succinyllysine mark. N6-acetyllysine; alternate is present on Lys16. N6-succinyllysine; alternate is present on Lys16. Tyr24 carries the phosphotyrosine modification. Ser35 carries the post-translational modification Phosphoserine. Position 40 is an N6-succinyllysine (Lys40). Ser49 is subject to Phosphoserine. Position 58 (His58) interacts with O2. His87 is a binding site for heme b. Ser102 is modified (phosphoserine). Thr108 carries the phosphothreonine modification. At Ser124 the chain carries Phosphoserine. A phosphothreonine mark is found at Thr134 and Thr137. Ser138 is modified (phosphoserine).

It belongs to the globin family. Heterotetramer of two alpha chains and two beta chains. Red blood cells.

Its function is as follows. Involved in oxygen transport from the lung to the various peripheral tissues. In terms of biological role, hemopressin acts as an antagonist peptide of the cannabinoid receptor CNR1. Hemopressin-binding efficiently blocks cannabinoid receptor CNR1 and subsequent signaling. The chain is Hemoglobin subunit alpha (HBA) from Lutra lutra (European river otter).